Reading from the N-terminus, the 394-residue chain is Probable sugar efflux transporter (394 aa).

The next 12 helical transmembrane spans lie at 15-35 (VLML…PVGL), 50-70 (VGLM…PMML), 79-99 (MLLM…SVAW), 109-129 (IGIA…AIRV), 137-157 (QALS…LPIG), 168-188 (ITFA…LKLL), 209-229 (PALV…YTAY), 249-269 (FLLL…SIYG), 272-292 (FPAT…MCLY), 299-319 (LAVS…GLAV), 333-353 (VAMS…ALLG), and 362-382 (MASV…WCAW).

The protein belongs to the major facilitator superfamily. SotB (TC 2.A.1.2) family.

The protein resides in the cell inner membrane. Involved in the efflux of sugars. The physiological role may be the reduction of the intracellular concentration of toxic sugars or sugar metabolites. In Erwinia tasmaniensis (strain DSM 17950 / CFBP 7177 / CIP 109463 / NCPPB 4357 / Et1/99), this protein is Probable sugar efflux transporter.